A 464-amino-acid polypeptide reads, in one-letter code: Cysteine--tRNA ligase (464 aa).

Cys29 provides a ligand contact to Zn(2+). The 'HIGH' region motif lies at 31-41 (ATVQGVPHIGH). Residues 160-180 (RLDEVQQGESTASGKRDPRDF) are disordered. The Zn(2+) site is built by Cys208, His233, and Glu237. The short motif at 264-268 (KMSKS) is the 'KMSKS' region element. Residue Lys267 participates in ATP binding.

This sequence belongs to the class-I aminoacyl-tRNA synthetase family. Monomer. It depends on Zn(2+) as a cofactor.

It localises to the cytoplasm. It carries out the reaction tRNA(Cys) + L-cysteine + ATP = L-cysteinyl-tRNA(Cys) + AMP + diphosphate. In Saccharopolyspora erythraea (strain ATCC 11635 / DSM 40517 / JCM 4748 / NBRC 13426 / NCIMB 8594 / NRRL 2338), this protein is Cysteine--tRNA ligase.